Consider the following 396-residue polypeptide: MSKEKFERTKPHVNVGTIGHVDHGKTTLTAAITKVMAEVRGGEFKDYADIDNAPEERERGITISTAHVEYESEIRHYAHVDCPGHADYIKNMITGAAQMDGAIIVIAATDGPMAQTREHILLSKQVGVPYIVVYMNKADMVDDEELVELVEMEIRELLDEYDFPGDDTPVIFGSALKALEGDISDIGVPSILKLVDALDSYIPTPKRDTDKSFIMPIEDVFSISGRGTVVTGRIEAGVVNIGDELEIVGIKDTKTTTCTGVEMFRKLLSSGEAGDNVGVLLRGTKREEVERGQVLSKPGSIKPHAKFEAEIYILSKDEGGRHTPFFNNYRPQFYFRTTDVTGACQLPDGIEMVMPGDNVKMRVELLSPIAMEDGLRFAIREGGRTVGAGVVSKVTD.

The region spanning 10 to 206 (KPHVNVGTIG…ALDSYIPTPK (197 aa)) is the tr-type G domain. The tract at residues 19 to 26 (GHVDHGKT) is G1. 19–26 (GHVDHGKT) is a GTP binding site. T26 provides a ligand contact to Mg(2+). A G2 region spans residues 60–64 (GITIS). The G3 stretch occupies residues 81–84 (DCPG). Residues 81 to 85 (DCPGH) and 136 to 139 (NKAD) contribute to the GTP site. The tract at residues 136 to 139 (NKAD) is G4. Positions 174–176 (SAL) are G5.

It belongs to the TRAFAC class translation factor GTPase superfamily. Classic translation factor GTPase family. EF-Tu/EF-1A subfamily. As to quaternary structure, monomer.

The protein resides in the cytoplasm. The catalysed reaction is GTP + H2O = GDP + phosphate + H(+). Its function is as follows. GTP hydrolase that promotes the GTP-dependent binding of aminoacyl-tRNA to the A-site of ribosomes during protein biosynthesis. The polypeptide is Elongation factor Tu (Vesicomyosocius okutanii subsp. Calyptogena okutanii (strain HA)).